Consider the following 293-residue polypeptide: Elongation factor Ts (293 aa).

Residues 80-83 (TDFV) are involved in Mg(2+) ion dislocation from EF-Tu.

The protein belongs to the EF-Ts family.

It is found in the cytoplasm. Associates with the EF-Tu.GDP complex and induces the exchange of GDP to GTP. It remains bound to the aminoacyl-tRNA.EF-Tu.GTP complex up to the GTP hydrolysis stage on the ribosome. This Burkholderia ambifaria (strain MC40-6) protein is Elongation factor Ts.